The primary structure comprises 161 residues: Nucleotide-binding protein PFLU_4927 (161 aa).

Belongs to the YajQ family.

Nucleotide-binding protein. This is Nucleotide-binding protein PFLU_4927 from Pseudomonas fluorescens (strain SBW25).